Here is a 217-residue protein sequence, read N- to C-terminus: Uracil-DNA glycosylase (217 aa).

Residue Asp-62 is the Proton acceptor of the active site.

It belongs to the uracil-DNA glycosylase (UDG) superfamily. UNG family.

Its subcellular location is the cytoplasm. It carries out the reaction Hydrolyzes single-stranded DNA or mismatched double-stranded DNA and polynucleotides, releasing free uracil.. Functionally, excises uracil residues from the DNA which can arise as a result of misincorporation of dUMP residues by DNA polymerase or due to deamination of cytosine. The sequence is that of Uracil-DNA glycosylase from Streptococcus pneumoniae serotype 19F (strain G54).